Reading from the N-terminus, the 760-residue chain is Probable 3',5'-cyclic phosphodiesterase pde-6 (760 aa).

2 disordered regions span residues 1 to 47 (MGDR…AATA) and 410 to 429 (KRSVVDAHREKRGSHGERRR). Positions 33–47 (PAARRGAQRAPAATA) are enriched in low complexity. The span at 412 to 429 (SVVDAHREKRGSHGERRR) shows a compositional bias: basic and acidic residues. The region spanning 426–750 (ERRRVSADVK…EKWKVMTSQW (325 aa)) is the PDEase domain. His-502 functions as the Proton donor in the catalytic mechanism. 4 residues coordinate a divalent metal cation: His-506, His-542, Asp-543, and Asp-656.

It belongs to the cyclic nucleotide phosphodiesterase family. The cofactor is a divalent metal cation.

It carries out the reaction a nucleoside 3',5'-cyclic phosphate + H2O = a nucleoside 5'-phosphate + H(+). This chain is Probable 3',5'-cyclic phosphodiesterase pde-6 (pde-6), found in Caenorhabditis elegans.